A 361-amino-acid chain; its full sequence is Chorismate synthase (361 aa).

NADP(+)-binding residues include Arg48 and Arg54. Residues 125–127 (RSS), 238–239 (NA), Gly278, 293–297 (KPTSS), and Arg319 contribute to the FMN site.

It belongs to the chorismate synthase family. In terms of assembly, homotetramer. FMNH2 is required as a cofactor.

The catalysed reaction is 5-O-(1-carboxyvinyl)-3-phosphoshikimate = chorismate + phosphate. It participates in metabolic intermediate biosynthesis; chorismate biosynthesis; chorismate from D-erythrose 4-phosphate and phosphoenolpyruvate: step 7/7. Functionally, catalyzes the anti-1,4-elimination of the C-3 phosphate and the C-6 proR hydrogen from 5-enolpyruvylshikimate-3-phosphate (EPSP) to yield chorismate, which is the branch point compound that serves as the starting substrate for the three terminal pathways of aromatic amino acid biosynthesis. This reaction introduces a second double bond into the aromatic ring system. In Escherichia coli O1:K1 / APEC, this protein is Chorismate synthase.